An 84-amino-acid polypeptide reads, in one-letter code: MPTRRTPKPGQRKKPNILRERGITYVDYKDVALLRQFISDRGKIRARRITGLTPRQHREVTRAIKNAREMALLPYPGPAAARGR.

This sequence belongs to the bacterial ribosomal protein bS18 family. Part of the 30S ribosomal subunit. Forms a tight heterodimer with protein bS6.

In terms of biological role, binds as a heterodimer with protein bS6 to the central domain of the 16S rRNA, where it helps stabilize the platform of the 30S subunit. This is Small ribosomal subunit protein bS18A from Frankia alni (strain DSM 45986 / CECT 9034 / ACN14a).